A 917-amino-acid polypeptide reads, in one-letter code: Major intrinsically disordered Notch2-binding receptor 1 (917 aa).

Topologically, residues 1–892 are cytoplasmic; that stretch reads MEANQEASLF…AEFRRAKVCK (892 aa). Disordered regions lie at residues 337–367, 388–410, 461–483, 568–588, 652–687, 706–727, and 746–783; these read STYFGPTPVMGTQDTRRCPGRSSKQTPWPAK, PSEEKLRYPNSGSQTPNFSGPDR, SCTSGQHSSDTSSVGTQTEQHVL, ITNGVSSGKGDKCNRPENVHH, SEAPSDDSASPRVFRAHSGSHGPKLENSPDWCCSDA, TRPSSRSLTEENSATESKIASI, and NEEEIKDAGPANNKDWHRKSKEADRQYDIPPQHRLPKQ. Polar residues predominate over residues 461–480; it reads SCTSGQHSSDTSSVGTQTEQ. Residues 576–588 are compositionally biased toward basic and acidic residues; the sequence is KGDKCNRPENVHH. Ser-712 is subject to Phosphoserine. A helical membrane pass occupies residues 893–913; sequence IAALITAAACTVILVIVVPIC. The Extracellular segment spans residues 914–917; it reads TMKS.

It belongs to the MINAR family. Interacts with NOTCH2; this interaction increases MINAR1 stability. Interacts (via N-terminus) with DEPTOR (via PDZ domain); this interaction may stabilize DEPTOR protein by impairing its ubiquitination. Expressed in brain and in islets of Langerhans.

It is found in the cell membrane. Functionally, intrinsically disordered protein which may negatively regulate mTOR signaling pathway by stabilizing the mTOR complex component DEPTOR. Negatively regulates angiogenesis. Negatively regulates cell growth. Negatively regulates neurite outgrowth in hippocampal neurons. This chain is Major intrinsically disordered Notch2-binding receptor 1 (Minar1), found in Mus musculus (Mouse).